Here is a 159-residue protein sequence, read N- to C-terminus: Small ribosomal subunit protein uS4 (159 aa).

The region spanning 106–158 (RRLQTLVFRMGLAKSIHHARQLVVHGHVLVAGRRVTSPGFLVPRELEDKITIE) is the S4 RNA-binding domain.

The protein belongs to the universal ribosomal protein uS4 family. Part of the 30S ribosomal subunit. Contacts protein S5. The interaction surface between S4 and S5 is involved in control of translational fidelity.

One of the primary rRNA binding proteins, it binds directly to 16S rRNA where it nucleates assembly of the body of the 30S subunit. Functionally, with S5 and S12 plays an important role in translational accuracy. This is Small ribosomal subunit protein uS4 from Pyrobaculum calidifontis (strain DSM 21063 / JCM 11548 / VA1).